A 243-amino-acid chain; its full sequence is Thiamin pyrophosphokinase 1 (243 aa).

This sequence belongs to the thiamine pyrophosphokinase family.

The catalysed reaction is thiamine + ATP = thiamine diphosphate + AMP + H(+). Its pathway is cofactor biosynthesis; thiamine diphosphate biosynthesis; thiamine diphosphate from thiamine: step 1/1. Catalyzes the phosphorylation of thiamine to thiamine pyrophosphate. Functions cell non-autonomously. In Caenorhabditis elegans, this protein is Thiamin pyrophosphokinase 1.